The chain runs to 572 residues: Squalene synthase (572 aa).

A run of 2 helical transmembrane segments spans residues 316 to 336 (SVFN…ELMF) and 492 to 512 (FFLI…LITW).

It belongs to the phytoene/squalene synthase family. In terms of assembly, monomer. It depends on Mg(2+) as a cofactor.

It localises to the endoplasmic reticulum membrane. The enzyme catalyses 2 (2E,6E)-farnesyl diphosphate + NADPH + H(+) = squalene + 2 diphosphate + NADP(+). It catalyses the reaction 2 (2E,6E)-farnesyl diphosphate + NADH + H(+) = squalene + 2 diphosphate + NAD(+). Its pathway is terpene metabolism; lanosterol biosynthesis; lanosterol from farnesyl diphosphate: step 1/3. Functionally, catalyzes the condensation of 2 two farnesyl pyrophosphate moieties to form squalene. It is the first committed enzyme of the sterol biosynthesis pathway. Required for the biosynthesis of ergosterol. In Mycosarcoma maydis (Corn smut fungus), this protein is Squalene synthase (ERG9).